The chain runs to 345 residues: 4-hydroxythreonine-4-phosphate dehydrogenase (345 aa).

Substrate is bound by residues histidine 148 and threonine 149. The a divalent metal cation site is built by histidine 182, histidine 227, and histidine 282. The substrate site is built by lysine 290, asparagine 299, and arginine 308.

Belongs to the PdxA family. Homodimer. Zn(2+) is required as a cofactor. The cofactor is Mg(2+). Requires Co(2+) as cofactor.

The protein resides in the cytoplasm. The enzyme catalyses 4-(phosphooxy)-L-threonine + NAD(+) = 3-amino-2-oxopropyl phosphate + CO2 + NADH. It functions in the pathway cofactor biosynthesis; pyridoxine 5'-phosphate biosynthesis; pyridoxine 5'-phosphate from D-erythrose 4-phosphate: step 4/5. Its function is as follows. Catalyzes the NAD(P)-dependent oxidation of 4-(phosphooxy)-L-threonine (HTP) into 2-amino-3-oxo-4-(phosphooxy)butyric acid which spontaneously decarboxylates to form 3-amino-2-oxopropyl phosphate (AHAP). The polypeptide is 4-hydroxythreonine-4-phosphate dehydrogenase (Bradyrhizobium diazoefficiens (strain JCM 10833 / BCRC 13528 / IAM 13628 / NBRC 14792 / USDA 110)).